The sequence spans 454 residues: Cytochrome b-c1 complex subunit 2, mitochondrial (454 aa).

The transit peptide at 1–35 (MISRSALSRGSQLALRRPAAAKTAQRGFAAAAASP) directs the protein to the mitochondrion.

This sequence belongs to the peptidase M16 family. UQCRC2/QCR2 subfamily. As to quaternary structure, component of the ubiquinol-cytochrome c oxidoreductase (cytochrome b-c1 complex, complex III, CIII), a multisubunit enzyme composed of 10 subunits. The complex is composed of 3 respiratory subunits cytochrome b (cob), cytochrome c1 (cyt-1) and Rieske protein (fes-1), 2 core protein subunits pep and ucr-1, and 5 low-molecular weight protein subunits qcr6, qcr7, qcr8, qcr9 and probably NCU16844/qcr10. The complex exists as an obligatory dimer and forms supercomplexes (SCs) in the inner mitochondrial membrane with NADH-ubiquinone oxidoreductase (complex I, CI) and cytochrome c oxidase (complex IV, CIV), resulting in different assemblies (supercomplexes SCI(1)III(2), SCIII(2)IV(1) and SCIII(2)IV(2) as well as higher order I(x)III(y)IV(z) megacomplexes).

The protein resides in the mitochondrion inner membrane. In terms of biological role, component of the ubiquinol-cytochrome c oxidoreductase, a multisubunit transmembrane complex that is part of the mitochondrial electron transport chain which drives oxidative phosphorylation. The respiratory chain contains 3 multisubunit complexes succinate dehydrogenase (complex II, CII), ubiquinol-cytochrome c oxidoreductase (cytochrome b-c1 complex, complex III, CIII) and cytochrome c oxidase (complex IV, CIV), that cooperate to transfer electrons derived from NADH and succinate to molecular oxygen, creating an electrochemical gradient over the inner membrane that drives transmembrane transport and the ATP synthase. The cytochrome b-c1 complex catalyzes electron transfer from ubiquinol to cytochrome c, linking this redox reaction to translocation of protons across the mitochondrial inner membrane, with protons being carried across the membrane as hydrogens on the quinol. In the process called Q cycle, 2 protons are consumed from the matrix, 4 protons are released into the intermembrane space and 2 electrons are passed to cytochrome c. This is Cytochrome b-c1 complex subunit 2, mitochondrial (ucr-1) from Neurospora crassa (strain ATCC 24698 / 74-OR23-1A / CBS 708.71 / DSM 1257 / FGSC 987).